Reading from the N-terminus, the 151-residue chain is Large ribosomal subunit protein bL9 (151 aa).

The protein belongs to the bacterial ribosomal protein bL9 family.

In terms of biological role, binds to the 23S rRNA. The sequence is that of Large ribosomal subunit protein bL9 from Chlorobium phaeobacteroides (strain DSM 266 / SMG 266 / 2430).